Consider the following 20-residue polypeptide: Flagellar filament 33 kDa core protein (20 aa).

Belongs to the bacterial flagellin family. As to quaternary structure, the flagellum consists of an outer layer composed of repeating units of FlaA around a core that contains one or all of five antigenically related polypeptides.

It is found in the periplasmic flagellum. It localises to the periplasm. In terms of biological role, component of the core of the flagella. The protein is Flagellar filament 33 kDa core protein of Spirochaeta aurantia.